Here is a 243-residue protein sequence, read N- to C-terminus: UPF0246 protein Sez_1855 (243 aa).

This sequence belongs to the UPF0246 family.

The protein is UPF0246 protein Sez_1855 of Streptococcus equi subsp. zooepidemicus (strain MGCS10565).